The primary structure comprises 412 residues: Proteasome-activating nucleotidase 2 (412 aa).

The stretch at 28-74 forms a coiled coil; that stretch reads LRQHFERMVDVNRELDQRLQNADDRHAELVDEVDQMKARNEALKTAS. Residues 196-201 and histidine 335 each bind ATP; that span reads GTGKTM. The interval 409–412 is docks into pockets in the proteasome alpha-ring to cause gate opening; the sequence is DYQY.

This sequence belongs to the AAA ATPase family. Homohexamer. The hexameric complex has a two-ring architecture resembling a top hat that caps the 20S proteasome core at one or both ends. Upon ATP-binding, the C-terminus of PAN interacts with the alpha-rings of the proteasome core by binding to the intersubunit pockets.

It localises to the cytoplasm. ATPase which is responsible for recognizing, binding, unfolding and translocation of substrate proteins into the archaeal 20S proteasome core particle. Is essential for opening the gate of the 20S proteasome via an interaction with its C-terminus, thereby allowing substrate entry and access to the site of proteolysis. Thus, the C-termini of the proteasomal ATPase function like a 'key in a lock' to induce gate opening and therefore regulate proteolysis. Unfolding activity requires energy from ATP hydrolysis, whereas ATP binding alone promotes ATPase-20S proteasome association which triggers gate opening, and supports translocation of unfolded substrates. The polypeptide is Proteasome-activating nucleotidase 2 (Haloferax volcanii (strain ATCC 29605 / DSM 3757 / JCM 8879 / NBRC 14742 / NCIMB 2012 / VKM B-1768 / DS2) (Halobacterium volcanii)).